Here is a 526-residue protein sequence, read N- to C-terminus: Amine oxidase [flavin-containing] A (526 aa).

The residue at position 1 (methionine 1) is an N-acetylmethionine. Over 1–497 the chain is Cytoplasmic; the sequence is MTDLEKPNLA…HTFLERNLPS (497 aa). Serine 383 is subject to Phosphoserine. Position 406 is an S-8alpha-FAD cysteine (cysteine 406). Residues 498 to 518 form a helical; Anchor for type IV membrane protein membrane-spanning segment; sequence VPGLLKITGVSTSVALLCFVL. At 519 to 526 the chain is on the mitochondrial intermembrane side; sequence YKIKKLPC. An interaction with membrane phospholipid headgroups region spans residues 520-522; that stretch reads KIK.

Belongs to the flavin monoamine oxidase family. As to quaternary structure, monomer, homo- or heterodimer (containing two subunits of similar size). Each subunit contains a covalently bound flavin. Enzymatically active as monomer. It depends on FAD as a cofactor.

It is found in the mitochondrion outer membrane. It carries out the reaction a secondary aliphatic amine + O2 + H2O = a primary amine + an aldehyde + H2O2. The catalysed reaction is a primary methyl amine + O2 + H2O = an aldehyde + H2O2 + NH4(+). The enzyme catalyses (R)-adrenaline + O2 + H2O = (R)-3,4-dihydroxymandelaldehyde + methylamine + H2O2. It catalyses the reaction dopamine + O2 + H2O = 3,4-dihydroxyphenylacetaldehyde + H2O2 + NH4(+). It carries out the reaction tyramine + O2 + H2O = (4-hydroxyphenyl)acetaldehyde + H2O2 + NH4(+). The catalysed reaction is (R)-noradrenaline + O2 + H2O = (R)-3,4-dihydroxymandelaldehyde + H2O2 + NH4(+). The enzyme catalyses serotonin + O2 + H2O = (5-hydroxyindol-3-yl)acetaldehyde + H2O2 + NH4(+). It catalyses the reaction kynuramine + O2 + H2O = 3-(2-aminophenyl)-3-oxopropanal + H2O2 + NH4(+). It carries out the reaction tryptamine + O2 + H2O = indole-3-acetaldehyde + H2O2 + NH4(+). The catalysed reaction is 2-phenylethylamine + O2 + H2O = 2-phenylacetaldehyde + H2O2 + NH4(+). Catalyzes the oxidative deamination of primary and some secondary amine such as neurotransmitters, with concomitant reduction of oxygen to hydrogen peroxide and has important functions in the metabolism of neuroactive and vasoactive amines in the central nervous system and peripheral tissues. Preferentially oxidizes serotonin. Also catalyzes the oxidative deamination of kynuramine to 3-(2-aminophenyl)-3-oxopropanal that can spontaneously condense to 4-hydroxyquinoline. This Rattus norvegicus (Rat) protein is Amine oxidase [flavin-containing] A.